Consider the following 360-residue polypeptide: Protein YIM1-1 (360 aa).

Belongs to the YIM1 family.

It localises to the lipid droplet. The protein localises to the mitochondrion. In Lachancea thermotolerans (strain ATCC 56472 / CBS 6340 / NRRL Y-8284) (Yeast), this protein is Protein YIM1-1 (YIM1-1).